A 1080-amino-acid chain; its full sequence is DNA-directed RNA polymerase subunit beta (1080 aa).

It belongs to the RNA polymerase beta chain family. In plastids the minimal PEP RNA polymerase catalytic core is composed of four subunits: alpha, beta, beta', and beta''. When a (nuclear-encoded) sigma factor is associated with the core the holoenzyme is formed, which can initiate transcription.

It localises to the plastid. It is found in the chloroplast. It catalyses the reaction RNA(n) + a ribonucleoside 5'-triphosphate = RNA(n+1) + diphosphate. Functionally, DNA-dependent RNA polymerase catalyzes the transcription of DNA into RNA using the four ribonucleoside triphosphates as substrates. This Mesostigma viride (Green alga) protein is DNA-directed RNA polymerase subunit beta.